Consider the following 147-residue polypeptide: Prefoldin subunit alpha (147 aa).

The protein belongs to the prefoldin subunit alpha family. As to quaternary structure, heterohexamer of two alpha and four beta subunits.

It is found in the cytoplasm. In terms of biological role, molecular chaperone capable of stabilizing a range of proteins. Seems to fulfill an ATP-independent, HSP70-like function in archaeal de novo protein folding. The polypeptide is Prefoldin subunit alpha (pfdA) (Saccharolobus solfataricus (strain ATCC 35092 / DSM 1617 / JCM 11322 / P2) (Sulfolobus solfataricus)).